A 409-amino-acid polypeptide reads, in one-letter code: LL-diaminopimelate aminotransferase (409 aa).

Residues Tyr15 and Gly42 each coordinate substrate. Pyridoxal 5'-phosphate contacts are provided by residues Tyr72, 108–109, Tyr132, Asn187, Tyr218, and 246–248; these read SK and SFS. Substrate is bound by residues Lys109, Tyr132, and Asn187. Lys249 is modified (N6-(pyridoxal phosphate)lysine). 2 residues coordinate pyridoxal 5'-phosphate: Arg257 and Asn292. Substrate contacts are provided by Asn292 and Arg388.

Belongs to the class-I pyridoxal-phosphate-dependent aminotransferase family. LL-diaminopimelate aminotransferase subfamily. In terms of assembly, homodimer. Pyridoxal 5'-phosphate is required as a cofactor.

It carries out the reaction (2S,6S)-2,6-diaminopimelate + 2-oxoglutarate = (S)-2,3,4,5-tetrahydrodipicolinate + L-glutamate + H2O + H(+). It participates in amino-acid biosynthesis; L-lysine biosynthesis via DAP pathway; LL-2,6-diaminopimelate from (S)-tetrahydrodipicolinate (aminotransferase route): step 1/1. Functionally, involved in the synthesis of meso-diaminopimelate (m-DAP or DL-DAP), required for both lysine and peptidoglycan biosynthesis. Catalyzes the direct conversion of tetrahydrodipicolinate to LL-diaminopimelate. The protein is LL-diaminopimelate aminotransferase of Heliobacterium modesticaldum (strain ATCC 51547 / Ice1).